A 489-amino-acid polypeptide reads, in one-letter code: Glucose-6-phosphate isomerase (489 aa).

Catalysis depends on E309, which acts as the Proton donor. Catalysis depends on residues H340 and K459.

Belongs to the GPI family.

Its subcellular location is the cytoplasm. The catalysed reaction is alpha-D-glucose 6-phosphate = beta-D-fructose 6-phosphate. The protein operates within carbohydrate biosynthesis; gluconeogenesis. It participates in carbohydrate degradation; glycolysis; D-glyceraldehyde 3-phosphate and glycerone phosphate from D-glucose: step 2/4. In terms of biological role, catalyzes the reversible isomerization of glucose-6-phosphate to fructose-6-phosphate. This Idiomarina loihiensis (strain ATCC BAA-735 / DSM 15497 / L2-TR) protein is Glucose-6-phosphate isomerase.